The following is a 298-amino-acid chain: HTH-type transcriptional regulator ArgP (298 aa).

The region spanning 4–60 (LDYKWIEALDAVVAQGGFERAAEELYISQSAVSQRIKQLERFLAQPVLIREQPPKPT) is the HTH lysR-type domain. The H-T-H motif DNA-binding region spans 21-40 (FERAAEELYISQSAVSQRIK).

This sequence belongs to the LysR transcriptional regulatory family. Homodimer.

Functionally, controls the transcription of genes involved in arginine and lysine metabolism. The sequence is that of HTH-type transcriptional regulator ArgP from Vibrio vulnificus (strain CMCP6).